The primary structure comprises 755 residues: Atypical kinase coq-8, mitochondrial (755 aa).

Residues 57 to 78 (QDVDPLKEPNKTNAPLLSPTLP) are disordered. A compositionally biased stretch (polar residues) spans 67 to 78 (KTNAPLLSPTLP). ATP is bound by residues 435–443 (FACASIGQV) and K457. D587 acts as the Proton acceptor in catalysis.

It belongs to the protein kinase superfamily. ADCK protein kinase family.

It is found in the mitochondrion. Its pathway is cofactor biosynthesis; ubiquinone biosynthesis. Functionally, atypical kinase involved in the biosynthesis of coenzyme Q, also named ubiquinone, an essential lipid-soluble electron transporter for aerobic cellular respiration. Its substrate specificity is still unclear: may act as a protein kinase that mediates phosphorylation of coq-3. According to other reports, acts as a small molecule kinase, possibly a lipid kinase that phosphorylates a prenyl lipid in the ubiquinone biosynthesis pathway, as suggested by its ability to bind coenzyme Q lipid intermediates. The chain is Atypical kinase coq-8, mitochondrial (coq-8) from Caenorhabditis elegans.